A 127-amino-acid polypeptide reads, in one-letter code: PLKTKPIDNNLPHRTGYNQASKQQTAPPCLLQRTVTTYVCRLPSRSGFWGSPPLPIIFSFVPDGRLSVRALVFSSMCAGFVIGEEDRDRIIMMIIIIHSPTIFILFCCSKEKRKKKQAATLTITLTS.

The tract at residues 1–24 is disordered; it reads PLKTKPIDNNLPHRTGYNQASKQQ.

This is an uncharacterized protein from Homo sapiens (Human).